Reading from the N-terminus, the 612-residue chain is Chaperone protein DnaK (612 aa).

The residue at position 174 (T174) is a Phosphothreonine; by autocatalysis. The interval G578–E612 is disordered. Residues A601–E612 are compositionally biased toward basic and acidic residues.

This sequence belongs to the heat shock protein 70 family.

Its function is as follows. Acts as a chaperone. This is Chaperone protein DnaK from Moorella thermoacetica (strain ATCC 39073 / JCM 9320).